Consider the following 316-residue polypeptide: Sorting nexin-20 (316 aa).

Residues 1-57 (MASHKHPGSPGWTGPICQDMAGTTPKASAPRPDLPRPGPEDHLEAQGSPSSNSSMTT) form a disordered region. Serine 3 carries the post-translational modification Phosphoserine. Positions 47 to 57 (GSPSSNSSMTT) are enriched in polar residues. The PX domain maps to 74–191 (VKLLFEIASA…DFLTRPELKE (118 aa)). Residues arginine 116, serine 118, lysine 143, and arginine 157 each contribute to the a 1,2-diacyl-sn-glycero-3-phospho-(1D-myo-inositol-3-phosphate) site.

The protein belongs to the sorting nexin family. In terms of assembly, interacts with SELPLG. Interaction with SELPLG is controversial.

The protein localises to the early endosome membrane. It is found in the cell membrane. Its subcellular location is the cytoplasm. It localises to the nucleus. Its function is as follows. May play a role in cellular vesicle trafficking. Has been proposed to function as a sorting protein that targets SELPLG into endosomes, but has no effect on SELPLG internalization from the cell surface, or on SELPLG-mediated cell-cell adhesion. The polypeptide is Sorting nexin-20 (SNX20) (Bos taurus (Bovine)).